Consider the following 354-residue polypeptide: Neuronal growth regulator 1 (354 aa).

The signal sequence occupies residues 1-37; that stretch reads MDMMLLVQGACCSNQWLAAVLLSLCCLLPSCLPAGQS. Ig-like C2-type domains are found at residues 38–134, 139–221, and 225–313; these read VDFP…VHLT, PKIY…KVVV, and PTIQ…LPLN. Cys60 and Cys118 are joined by a disulfide. Asn73 and Asn155 each carry an N-linked (GlcNAc...) asparagine glycan. 2 cysteine pairs are disulfide-bonded: Cys160-Cys203 and Cys245-Cys297. Tyr187 bears the Phosphotyrosine mark. Residues Asn275, Asn286, Asn294, and Asn307 are each glycosylated (N-linked (GlcNAc...) asparagine). Gly324 carries GPI-anchor amidated glycine lipidation. A propeptide spans 325 to 354 (removed in mature form); the sequence is SADVLFSCWYLVLTLSSFTSIFYLKNAILQ.

It belongs to the immunoglobulin superfamily. IgLON family.

The protein localises to the cell membrane. May be involved in cell-adhesion. May function as a trans-neural growth-promoting factor in regenerative axon sprouting in the mammalian brain. This is Neuronal growth regulator 1 (NEGR1) from Pongo abelii (Sumatran orangutan).